A 316-amino-acid polypeptide reads, in one-letter code: Acetyl-coenzyme A carboxylase carboxyl transferase subunit alpha (316 aa).

The CoA carboxyltransferase C-terminal domain maps to 39–293 (KLEEKNAQLT…KKHLQANLTN (255 aa)).

This sequence belongs to the AccA family. As to quaternary structure, acetyl-CoA carboxylase is a heterohexamer composed of biotin carboxyl carrier protein (AccB), biotin carboxylase (AccC) and two subunits each of ACCase subunit alpha (AccA) and ACCase subunit beta (AccD).

Its subcellular location is the cytoplasm. It catalyses the reaction N(6)-carboxybiotinyl-L-lysyl-[protein] + acetyl-CoA = N(6)-biotinyl-L-lysyl-[protein] + malonyl-CoA. The protein operates within lipid metabolism; malonyl-CoA biosynthesis; malonyl-CoA from acetyl-CoA: step 1/1. In terms of biological role, component of the acetyl coenzyme A carboxylase (ACC) complex. First, biotin carboxylase catalyzes the carboxylation of biotin on its carrier protein (BCCP) and then the CO(2) group is transferred by the carboxyltransferase to acetyl-CoA to form malonyl-CoA. In Coxiella burnetii (strain RSA 331 / Henzerling II), this protein is Acetyl-coenzyme A carboxylase carboxyl transferase subunit alpha.